The sequence spans 150 residues: D-aminoacyl-tRNA deacylase (150 aa).

The Gly-cisPro motif, important for rejection of L-amino acids signature appears at 138-139; it reads GP.

The protein belongs to the DTD family. In terms of assembly, homodimer.

The protein resides in the cytoplasm. It carries out the reaction glycyl-tRNA(Ala) + H2O = tRNA(Ala) + glycine + H(+). It catalyses the reaction a D-aminoacyl-tRNA + H2O = a tRNA + a D-alpha-amino acid + H(+). In terms of biological role, an aminoacyl-tRNA editing enzyme that deacylates mischarged D-aminoacyl-tRNAs. Also deacylates mischarged glycyl-tRNA(Ala), protecting cells against glycine mischarging by AlaRS. Acts via tRNA-based rather than protein-based catalysis; rejects L-amino acids rather than detecting D-amino acids in the active site. By recycling D-aminoacyl-tRNA to D-amino acids and free tRNA molecules, this enzyme counteracts the toxicity associated with the formation of D-aminoacyl-tRNA entities in vivo and helps enforce protein L-homochirality. This chain is D-aminoacyl-tRNA deacylase, found in Opitutus terrae (strain DSM 11246 / JCM 15787 / PB90-1).